The sequence spans 106 residues: Putative protein SH (106 aa).

The tract at residues 48–106 (HSQQNNSGHQFGDRFHSKGHQDTEGRILWKEASTRTTDSTETADTQLVQRQGNGGICLS) is disordered. Over residues 58–80 (FGDRFHSKGHQDTEGRILWKEAS) the composition is skewed to basic and acidic residues. Residues 81–92 (TRTTDSTETADT) are compositionally biased toward low complexity.

Heart.

May be involved with the regulation of GNRH gene expression. It is not known if this protein is transcribed. This chain is Putative protein SH, found in Rattus norvegicus (Rat).